The following is a 285-amino-acid chain: Tryptophan synthase alpha chain (285 aa).

Active-site proton acceptor residues include Glu-53 and Asp-64.

The protein belongs to the TrpA family. As to quaternary structure, tetramer of two alpha and two beta chains.

It carries out the reaction (1S,2R)-1-C-(indol-3-yl)glycerol 3-phosphate + L-serine = D-glyceraldehyde 3-phosphate + L-tryptophan + H2O. The protein operates within amino-acid biosynthesis; L-tryptophan biosynthesis; L-tryptophan from chorismate: step 5/5. Its function is as follows. The alpha subunit is responsible for the aldol cleavage of indoleglycerol phosphate to indole and glyceraldehyde 3-phosphate. This chain is Tryptophan synthase alpha chain, found in Bordetella pertussis (strain Tohama I / ATCC BAA-589 / NCTC 13251).